Here is a 206-residue protein sequence, read N- to C-terminus: Orotate phosphoribosyltransferase (206 aa).

5-phospho-alpha-D-ribose 1-diphosphate-binding positions include R114, K115, K118, H120, and E141 to S149. Residues T145 and R173 each coordinate orotate.

This sequence belongs to the purine/pyrimidine phosphoribosyltransferase family. PyrE subfamily. In terms of assembly, homodimer. Mg(2+) serves as cofactor.

The enzyme catalyses orotidine 5'-phosphate + diphosphate = orotate + 5-phospho-alpha-D-ribose 1-diphosphate. Its pathway is pyrimidine metabolism; UMP biosynthesis via de novo pathway; UMP from orotate: step 1/2. Its function is as follows. Catalyzes the transfer of a ribosyl phosphate group from 5-phosphoribose 1-diphosphate to orotate, leading to the formation of orotidine monophosphate (OMP). The polypeptide is Orotate phosphoribosyltransferase (Nostoc sp. (strain PCC 7120 / SAG 25.82 / UTEX 2576)).